The primary structure comprises 266 residues: Protein PAE0875 (266 aa).

The protein belongs to the CinA family.

This is Protein PAE0875 from Pyrobaculum aerophilum (strain ATCC 51768 / DSM 7523 / JCM 9630 / CIP 104966 / NBRC 100827 / IM2).